The following is a 731-amino-acid chain: Nucleolar GTP-binding protein 2 (731 aa).

Met-1 carries the post-translational modification N-acetylmethionine. The disordered stretch occupies residues 1 to 33; the sequence is MVKPKYKGRSTINPSKASTNPDRVQGAGGQNMR. Positions 10-22 are enriched in polar residues; sequence STINPSKASTNPD. The CP-type G domain occupies 207–368; that stretch reads WGELYKVIDS…LIDCPGVVYP (162 aa). GTP-binding positions include 317–324 and 361–365; these read GYPNVGKS and DCPGV. Residues 481 to 502 are disordered; the sequence is VVPEAAQNNPGEEVTETAGEGS. Phosphoserine is present on Ser-504. Over residues 555–589 the composition is skewed to acidic residues; that stretch reads LEEELESFSDEEEEEQEQQRDDAEESSSEPEEENV. Disordered regions lie at residues 555-594 and 630-731; these read LEEE…NDTK and EKIF…RQKQ. Basic and acidic residues-rich tracts occupy residues 630–652 and 662–671; these read EKIF…DRAP and QREEEQEHSN. 2 stretches are compositionally biased toward basic residues: residues 681 to 695 and 721 to 731; these read ERRR…KKVG and KHKRKKFRQKQ.

This sequence belongs to the TRAFAC class YlqF/YawG GTPase family. NOG2 subfamily. Interacts with LYAR and RPL23A. Interacts with the nuclear importin-beta receptor and, at a lower extent, with importin-alpha. In terms of tissue distribution, widely expressed, with the highest expression level in testis.

The protein localises to the nucleus. Its subcellular location is the nucleolus. Functionally, GTPase that associates with pre-60S ribosomal subunits in the nucleolus and is required for their nuclear export and maturation. May promote cell proliferation possibly by increasing p53/TP53 protein levels, and consequently those of its downstream product CDKN1A/p21, and decreasing RPL23A protein levels. The chain is Nucleolar GTP-binding protein 2 (GNL2) from Homo sapiens (Human).